A 379-amino-acid chain; its full sequence is RIB43A-like with coiled-coils protein 1 (379 aa).

Coiled coils occupy residues 43 to 111 and 285 to 337; these read EALN…RCEL and IRKV…EFRR.

Belongs to the RIB43A family. In terms of assembly, microtubule inner protein component of sperm flagellar doublet microtubules.

It localises to the cytoplasm. It is found in the cytoskeleton. The protein resides in the flagellum axoneme. This chain is RIB43A-like with coiled-coils protein 1 (RIBC1), found in Bos taurus (Bovine).